A 243-amino-acid chain; its full sequence is Tryptophan synthase alpha chain (243 aa).

Residues glutamate 31 and aspartate 42 each act as proton acceptor in the active site.

Belongs to the TrpA family. In terms of assembly, tetramer of two alpha and two beta chains.

It catalyses the reaction (1S,2R)-1-C-(indol-3-yl)glycerol 3-phosphate + L-serine = D-glyceraldehyde 3-phosphate + L-tryptophan + H2O. It participates in amino-acid biosynthesis; L-tryptophan biosynthesis; L-tryptophan from chorismate: step 5/5. Its function is as follows. The alpha subunit is responsible for the aldol cleavage of indoleglycerol phosphate to indole and glyceraldehyde 3-phosphate. This is Tryptophan synthase alpha chain from Staphylococcus epidermidis (strain ATCC 35984 / DSM 28319 / BCRC 17069 / CCUG 31568 / BM 3577 / RP62A).